The sequence spans 184 residues: Tumor necrosis factor alpha-induced protein 8-like protein 2 (184 aa).

Phosphoserine; by MAP3K7 is present on Ser3.

It belongs to the TNFAIP8 family. TNFAIP8L2 subfamily. As to quaternary structure, may interact with CASP8; however, such result is unclear since PubMed:19079267 could not reproduce the interaction with CASP8. Interacts with RAC1. In terms of processing, phosphorylated by TAK1/MAP3K7; this phosphorylation triggers association with BTRC and subsequent ubiquitination and degradation. Ubiquitinated in a BTRC-depdent manner; leading to degradation mediated through the proteasome pathway. In terms of tissue distribution, expressed in T-cells, B-cells, macrophages, neurons in the brain and brainstem, and stratified squamous epithelia of the esophagus, cervix and skin.

The protein localises to the cytoplasm. It is found in the nucleus. The protein resides in the lysosome. In terms of biological role, acts as a negative regulator of innate and adaptive immunity by maintaining immune homeostasis. Plays a regulatory role in the Toll-like signaling pathway by determining the strength of LPS-induced signaling and gene expression. Inhibits TCR-mediated T-cell activation and negatively regulate T-cell function to prevent hyperresponsiveness. Also inhibits autolysosome formation via negatively modulating MTOR activation by interacting with RAC1 and promoting the disassociation of the RAC1-MTOR complex. Plays an essential role in NK-cell biology by acting as a checkpoint and displaying an expression pattern correlating with NK-cell maturation process and by negatively regulating NK-cell maturation and antitumor immunity. Mechanistically, suppresses IL-15-triggered mTOR activity in NK-cells. The polypeptide is Tumor necrosis factor alpha-induced protein 8-like protein 2 (TNFAIP8L2) (Homo sapiens (Human)).